Consider the following 631-residue polypeptide: Phosphomethylpyrimidine synthase (631 aa).

Substrate contacts are provided by residues Asn-239, Met-268, Tyr-297, His-333, 353–355, 394–397, and Glu-433; these read SRG and DGLR. A Zn(2+)-binding site is contributed by His-437. Residue Tyr-460 participates in substrate binding. His-501 serves as a coordination point for Zn(2+). The [4Fe-4S] cluster site is built by Cys-581, Cys-584, and Cys-589.

Belongs to the ThiC family. Homodimer. It depends on [4Fe-4S] cluster as a cofactor.

It catalyses the reaction 5-amino-1-(5-phospho-beta-D-ribosyl)imidazole + S-adenosyl-L-methionine = 4-amino-2-methyl-5-(phosphooxymethyl)pyrimidine + CO + 5'-deoxyadenosine + formate + L-methionine + 3 H(+). Its pathway is cofactor biosynthesis; thiamine diphosphate biosynthesis. In terms of biological role, catalyzes the synthesis of the hydroxymethylpyrimidine phosphate (HMP-P) moiety of thiamine from aminoimidazole ribotide (AIR) in a radical S-adenosyl-L-methionine (SAM)-dependent reaction. The protein is Phosphomethylpyrimidine synthase of Escherichia coli O6:K15:H31 (strain 536 / UPEC).